The primary structure comprises 466 residues: Ribulose bisphosphate carboxylase large chain (466 aa).

An N6,N6,N6-trimethyllysine modification is found at K4. 2 residues coordinate substrate: N113 and T163. The Proton acceptor role is filled by K165. Residue K167 participates in substrate binding. 3 residues coordinate Mg(2+): K191, D193, and E194. N6-carboxylysine is present on K191. The Proton acceptor role is filled by H284. Residues R285, H317, and S369 each coordinate substrate.

Belongs to the RuBisCO large chain family. Type I subfamily. As to quaternary structure, heterohexadecamer of 8 large chains and 8 small chains; disulfide-linked. The disulfide link is formed within the large subunit homodimers. The cofactor is Mg(2+). The disulfide bond which can form in the large chain dimeric partners within the hexadecamer appears to be associated with oxidative stress and protein turnover.

Its subcellular location is the plastid. The protein resides in the chloroplast. The enzyme catalyses 2 (2R)-3-phosphoglycerate + 2 H(+) = D-ribulose 1,5-bisphosphate + CO2 + H2O. The catalysed reaction is D-ribulose 1,5-bisphosphate + O2 = 2-phosphoglycolate + (2R)-3-phosphoglycerate + 2 H(+). Functionally, ruBisCO catalyzes two reactions: the carboxylation of D-ribulose 1,5-bisphosphate, the primary event in carbon dioxide fixation, as well as the oxidative fragmentation of the pentose substrate in the photorespiration process. Both reactions occur simultaneously and in competition at the same active site. The chain is Ribulose bisphosphate carboxylase large chain from Pinguicula caerulea (Blueflower butterwort).